A 360-amino-acid polypeptide reads, in one-letter code: GDSL esterase/lipase At1g58430 (360 aa).

Residues 1 to 23 (MWTSKTISFTLFITTTLLGSCNA) form the signal peptide. Asn-22 carries N-linked (GlcNAc...) asparagine glycosylation. Ser-42 serves as the catalytic Nucleophile. N-linked (GlcNAc...) asparagine glycans are attached at residues Asn-104 and Asn-326. Active-site residues include Asp-334 and His-337.

This sequence belongs to the 'GDSL' lipolytic enzyme family.

Its subcellular location is the secreted. The chain is GDSL esterase/lipase At1g58430 from Arabidopsis thaliana (Mouse-ear cress).